The following is a 239-amino-acid chain: Enolase-phosphatase E1 (239 aa).

It belongs to the HAD-like hydrolase superfamily. MasA/MtnC family. As to quaternary structure, monomer. Mg(2+) is required as a cofactor.

It carries out the reaction 5-methylsulfanyl-2,3-dioxopentyl phosphate + H2O = 1,2-dihydroxy-5-(methylsulfanyl)pent-1-en-3-one + phosphate. Its pathway is amino-acid biosynthesis; L-methionine biosynthesis via salvage pathway; L-methionine from S-methyl-5-thio-alpha-D-ribose 1-phosphate: step 3/6. It functions in the pathway amino-acid biosynthesis; L-methionine biosynthesis via salvage pathway; L-methionine from S-methyl-5-thio-alpha-D-ribose 1-phosphate: step 4/6. Its function is as follows. Bifunctional enzyme that catalyzes the enolization of 2,3-diketo-5-methylthiopentyl-1-phosphate (DK-MTP-1-P) into the intermediate 2-hydroxy-3-keto-5-methylthiopentenyl-1-phosphate (HK-MTPenyl-1-P), which is then dephosphorylated to form the acireductone 1,2-dihydroxy-3-keto-5-methylthiopentene (DHK-MTPene). The protein is Enolase-phosphatase E1 of Streptomyces avermitilis (strain ATCC 31267 / DSM 46492 / JCM 5070 / NBRC 14893 / NCIMB 12804 / NRRL 8165 / MA-4680).